The sequence spans 246 residues: Osmotin-like protein OSML13 (246 aa).

An N-terminal signal peptide occupies residues 1-21 (MAYLRSSFVFFLLAFVTYTYA). 8 cysteine pairs are disulfide-bonded: Cys-30–Cys-225, Cys-72–Cys-82, Cys-87–Cys-93, Cys-141–Cys-213, Cys-146–Cys-196, Cys-154–Cys-164, Cys-168–Cys-177, and Cys-178–Cys-183.

It belongs to the thaumatin family.

This chain is Osmotin-like protein OSML13, found in Solanum commersonii (Commerson's wild potato).